Here is a 232-residue protein sequence, read N- to C-terminus: Ureidoacrylate amidohydrolase RutB (232 aa).

Residue aspartate 26 is the Proton acceptor of the active site. Lysine 135 is a catalytic residue. Catalysis depends on cysteine 168, which acts as the Nucleophile.

It belongs to the isochorismatase family. RutB subfamily.

The enzyme catalyses (Z)-3-ureidoacrylate + H2O + H(+) = (Z)-3-aminoacrylate + NH4(+) + CO2. The catalysed reaction is (Z)-3-ureidoacrylate + H2O = (Z)-3-aminoacrylate + carbamate + H(+). It carries out the reaction (Z)-2-methylureidoacrylate + H2O + H(+) = (Z)-2-methylaminoacrylate + NH4(+) + CO2. In terms of biological role, hydrolyzes ureidoacrylate to form aminoacrylate and carbamate. The carbamate hydrolyzes spontaneously, thereby releasing one of the nitrogen atoms of the pyrimidine ring as ammonia and one of its carbon atoms as CO2. This is Ureidoacrylate amidohydrolase RutB from Cronobacter sakazakii (strain ATCC BAA-894) (Enterobacter sakazakii).